Reading from the N-terminus, the 297-residue chain is Homoserine kinase (297 aa).

ATP is bound at residue 82–92; that stretch reads PVSRGLGSSAA.

It belongs to the GHMP kinase family. Homoserine kinase subfamily.

The protein resides in the cytoplasm. The enzyme catalyses L-homoserine + ATP = O-phospho-L-homoserine + ADP + H(+). The protein operates within amino-acid biosynthesis; L-threonine biosynthesis; L-threonine from L-aspartate: step 4/5. Functionally, catalyzes the ATP-dependent phosphorylation of L-homoserine to L-homoserine phosphate. The chain is Homoserine kinase from Clostridium botulinum (strain 657 / Type Ba4).